We begin with the raw amino-acid sequence, 492 residues long: Probable Xaa-Pro aminopeptidase AO090005001240 (492 aa).

4 residues coordinate Mn(2+): aspartate 272, aspartate 283, glutamate 420, and glutamate 459.

Belongs to the peptidase M24B family. The cofactor is Mn(2+).

The enzyme catalyses Release of any N-terminal amino acid, including proline, that is linked to proline, even from a dipeptide or tripeptide.. Its function is as follows. Catalyzes the removal of a penultimate prolyl residue from the N-termini of peptides. This is Probable Xaa-Pro aminopeptidase AO090005001240 from Aspergillus oryzae (strain ATCC 42149 / RIB 40) (Yellow koji mold).